Here is a 607-residue protein sequence, read N- to C-terminus: Potassium transporter KimA (607 aa).

Over 1–30 (MYHSIKRFLIGKPLKSQAAGEQKLTKLKAL) the chain is Cytoplasmic. Residues 31 to 49 (AMLSSDALSSVAYGTEQIL) traverse the membrane as a helical segment. D36 and Y43 together coordinate K(+). The Extracellular portion of the chain corresponds to 50-62 (IILATISAAAFWY). The chain crosses the membrane as a helical span at residues 63–84 (SIPIAVGVLILLLALILSYRQI). The Cytoplasmic portion of the chain corresponds to 85 to 105 (IYAYPQGGGAYIVSKENLGEK). The helical transmembrane segment at 106 to 134 (PGLIAGGSLLVDYILTVAVSISAGTDAIT) threads the bilayer. Residues D117 and S125 each contribute to the K(+) site. Residues 135 to 142 (SAFPALHD) are Extracellular-facing. The helical transmembrane segment at 143 to 162 (YHVPIAIFLVLVIMILNLRG) threads the bilayer. The Cytoplasmic segment spans residues 163-166 (LSES). A helical membrane pass occupies residues 167–190 (ASILAYPVYLFVVALLVLIAVGLF). The Extracellular segment spans residues 191–214 (KLMTGQIDQPAHHTSLGTPVAGIT). The chain crosses the membrane as a helical span at residues 215-238 (LFLLLKAFSSGCSALTGVEAISNA). The Cytoplasmic portion of the chain corresponds to 239–249 (IPAFKNPPARN). A helical transmembrane segment spans residues 250–271 (AARTLAMMGILLAILFSGITVL). Over 272–298 (AYGYGTAPKPDETVVSQIASETFGRNV) the chain is Extracellular. A helical membrane pass occupies residues 299 to 323 (FYYVIQGVTSLILVLAANTGFSAFP). Residues 324–347 (QLAFNLARDQYMPRMFTVRGDRLG) are Cytoplasmic-facing. The chain crosses the membrane as a helical span at residues 348–366 (FSNGIIFLGFASIVLIILF). Residues 367-372 (GGQTEH) are Extracellular-facing. A helical transmembrane segment spans residues 373–393 (LIPLYAVGVFIPFTLSQTGMC). Residues 394–405 (MKWIKQKPKGWI) are Cytoplasmic-facing. A helical transmembrane segment spans residues 406–428 (GKMLINSCGALISFMVLSILFVT). Residues 429–431 (KFN) are Extracellular-facing. The helical transmembrane segment at 432-447 (VVWPVLIFMPIVVLLF) threads the bilayer. Topologically, residues 448-607 (FAIKNHYTAV…VATLPYHFKK (160 aa)) are cytoplasmic.

It belongs to the amino acid-polyamine-organocation (APC) superfamily. In terms of assembly, homodimer.

Its subcellular location is the cell membrane. The enzyme catalyses K(+)(in) + H(+)(in) = K(+)(out) + H(+)(out). Its activity is regulated as follows. Potassium uptake increases at lower external pH and is abolished by the proton ionophore carbonyl cyanide m-chlorophenylhydrazone (CCCP). Binds cyclic di-AMP (c-di-AMP), which inhibits the potassium transport activity. Functionally, high-affinity potassium transporter. Functions as a K(+)/H(+) symporter. The sequence is that of Potassium transporter KimA from Bacillus subtilis (strain 168).